The primary structure comprises 253 residues: 5'-nucleotidase SurE (253 aa).

Residues D8, D9, S40, and N93 each contribute to the a divalent metal cation site.

The protein belongs to the SurE nucleotidase family. It depends on a divalent metal cation as a cofactor.

The protein localises to the cytoplasm. The enzyme catalyses a ribonucleoside 5'-phosphate + H2O = a ribonucleoside + phosphate. Nucleotidase that shows phosphatase activity on nucleoside 5'-monophosphates. This Methylobacterium sp. (strain 4-46) protein is 5'-nucleotidase SurE.